A 747-amino-acid polypeptide reads, in one-letter code: Cysteine--tRNA ligase, cytoplasmic (747 aa).

A disordered region spans residues 1-25 (MTDSWERGKGRRTQPPWSAPNTQAQ). The segment covering 15-25 (PPWSAPNTQAQ) has biased composition (polar residues). A Zn(2+)-binding site is contributed by C54. G55 is a binding site for L-cysteine. A 'HIGH' region motif is present at residues 56–66 (PTVYDASHMGH). Residue T95 participates in L-cysteine binding. Positions 100-103 (KIIK) match the 'KIIK' region motif. Positions 347, 372, and 376 each coordinate Zn(2+). H372 serves as a coordination point for L-cysteine. The 'KMSKS' region motif lies at 405–409 (KMSKS). K408 lines the ATP pocket. Positions 651–683 (EEKRKAEEEKQRKKEEAARKKQQQEAAKLEKMK) are enriched in basic and acidic residues. Residues 651–722 (EEKRKAEEEK…KELSKGQSKK (72 aa)) form a disordered region.

The protein belongs to the class-I aminoacyl-tRNA synthetase family. Homodimer. It depends on Zn(2+) as a cofactor.

The protein localises to the cytoplasm. It carries out the reaction tRNA(Cys) + L-cysteine + ATP = L-cysteinyl-tRNA(Cys) + AMP + diphosphate. Functionally, catalyzes the ATP-dependent ligation of cysteine to tRNA(Cys). In Xenopus tropicalis (Western clawed frog), this protein is Cysteine--tRNA ligase, cytoplasmic (cars1).